The chain runs to 122 residues: Large ribosomal subunit protein uL14 (122 aa).

The protein belongs to the universal ribosomal protein uL14 family. In terms of assembly, part of the 50S ribosomal subunit. Forms a cluster with proteins L3 and L19. In the 70S ribosome, L14 and L19 interact and together make contacts with the 16S rRNA in bridges B5 and B8.

Functionally, binds to 23S rRNA. Forms part of two intersubunit bridges in the 70S ribosome. The sequence is that of Large ribosomal subunit protein uL14 from Streptococcus pyogenes serotype M2 (strain MGAS10270).